The primary structure comprises 517 residues: Phenol 2-monooxygenase, oxygenase component DmpN (517 aa).

Fe cation is bound by residues Glu109, Glu139, His142, Glu200, Glu234, and His237.

The protein belongs to the TmoA/XamoA family. The multicomponent enzyme phenol hydroxylase is formed by DmpL (P1 component), DmpM (P2 component), DmpN (P3 component), DmpO (P4 component) and DmpP (P5 component). The oxygenase component is a dimer composed of three subunits, DmpL, DmpN and DmpO (DmpLNO). DmpN interacts with the auxiliary protein DmpK (P0 component). The cofactor is Fe(2+).

The enzyme catalyses phenol + NADH + O2 + H(+) = catechol + NAD(+) + H2O. It functions in the pathway aromatic compound metabolism; phenol degradation. Requires DmpM for efficient turnover. The activity of DmpLNO oxygenase is inhibited by dithiothreitol (DTT) by a mechanism apparently involving H(2)O(2) generation. Functionally, part of a multicomponent enzyme which catalyzes the degradation of phenol and some of its methylated derivatives. DmpL, DmpN and DmpO form the oxygenase component of the complex. Required for growth on phenol and for in vitro phenol hydroxylase activity. This chain is Phenol 2-monooxygenase, oxygenase component DmpN, found in Pseudomonas sp. (strain CF600).